We begin with the raw amino-acid sequence, 420 residues long: Caspase-12 (420 aa).

In terms of domain architecture, CARD spans 1-92 (MAAKRTHERD…QLSLQFPSDD (92 aa)). Phosphoserine occurs at positions 85 and 90. The interval 93–115 (EEDELQKMFTPSSASESRGKVED) is disordered. Active-site residues include His-251 and Cys-299.

Belongs to the peptidase C14A family. As to quaternary structure, heterotetramer that consists of two anti-parallel arranged heterodimers, each one formed by two subunits (Potential). May interact with TRAF2.

In terms of biological role, involved in the activation cascade of caspases responsible for apoptosis execution. The sequence is that of Caspase-12 (Casp12) from Rattus norvegicus (Rat).